We begin with the raw amino-acid sequence, 356 residues long: Putative mitogen-activated protein kinase 14C (356 aa).

The 286-residue stretch at 20 to 305 (YEFVRFLGGG…AAEAMLHPYL (286 aa)) folds into the Protein kinase domain. Residues 26 to 34 (LGGGSFGQV) and lysine 49 contribute to the ATP site. Aspartate 147 (proton acceptor) is an active-site residue. Threonine 177 is modified (phosphothreonine).

The protein belongs to the protein kinase superfamily. CMGC Ser/Thr protein kinase family. MAP kinase subfamily. Requires Mg(2+) as cofactor. The phosphorylation on Thr-177 activates the enzyme. A conserved Tyr, which must also be phosphorylated to activate the enzyme in closely related sequences, is replaced by His-179 in this sequence.

It catalyses the reaction L-seryl-[protein] + ATP = O-phospho-L-seryl-[protein] + ADP + H(+). It carries out the reaction L-threonyl-[protein] + ATP = O-phospho-L-threonyl-[protein] + ADP + H(+). In terms of biological role, kinase involved in a signal transduction pathway. This chain is Putative mitogen-activated protein kinase 14C (p38c), found in Drosophila melanogaster (Fruit fly).